Consider the following 471-residue polypeptide: 6-phosphofructo-2-kinase/fructose-2,6-bisphosphatase 1 (471 aa).

Residue S2 is modified to N-acetylserine. The interval 2-250 (SREMGELTQT…AYYLMNIHVT (249 aa)) is 6-phosphofructo-2-kinase. S33 is modified (phosphoserine; by PKA). An ATP-binding site is contributed by 49-57 (GLPARGKTY). R82 and R105 together coordinate beta-D-fructose 6-phosphate. The active site involves D131. The beta-D-fructose 6-phosphate site is built by T133 and R139. At S141 the chain carries Phosphoserine. C161 is an active-site residue. ATP is bound at residue 170 to 175 (NIKQVK). K175, R196, and Y200 together coordinate beta-D-fructose 6-phosphate. Residues 251-471 (PRSIYLCRHG…EALDTVPAHY (221 aa)) are fructose-2,6-bisphosphatase. R258 contacts beta-D-fructose 2,6-bisphosphate. Catalysis depends on H259, which acts as the Tele-phosphohistidine intermediate. Beta-D-fructose 2,6-bisphosphate contacts are provided by N265, G271, and R308. The Proton donor/acceptor role is filled by E328. Positions 339, 353, 357, 368, 394, and 398 each coordinate beta-D-fructose 2,6-bisphosphate. 350–353 (FALR) is a binding site for ATP. Residues 394 to 398 (QAVMR) and Y430 each bind ATP.

It in the C-terminal section; belongs to the phosphoglycerate mutase family. Homodimer. In terms of tissue distribution, liver.

The catalysed reaction is beta-D-fructose 2,6-bisphosphate + H2O = beta-D-fructose 6-phosphate + phosphate. It carries out the reaction beta-D-fructose 6-phosphate + ATP = beta-D-fructose 2,6-bisphosphate + ADP + H(+). With respect to regulation, phosphorylation at Ser-33 inhibits the kinase and activates the bisphosphatase. Its function is as follows. Synthesis and degradation of fructose 2,6-bisphosphate. This Rattus norvegicus (Rat) protein is 6-phosphofructo-2-kinase/fructose-2,6-bisphosphatase 1.